Reading from the N-terminus, the 122-residue chain is Large ribosomal subunit protein uL22 (122 aa).

Positions 102–122 are disordered; that stretch reads VAEGKEMKSSKSHKKNQAEGK.

This sequence belongs to the universal ribosomal protein uL22 family. In terms of assembly, part of the 50S ribosomal subunit.

Its function is as follows. This protein binds specifically to 23S rRNA; its binding is stimulated by other ribosomal proteins, e.g. L4, L17, and L20. It is important during the early stages of 50S assembly. It makes multiple contacts with different domains of the 23S rRNA in the assembled 50S subunit and ribosome. In terms of biological role, the globular domain of the protein is located near the polypeptide exit tunnel on the outside of the subunit, while an extended beta-hairpin is found that lines the wall of the exit tunnel in the center of the 70S ribosome. The chain is Large ribosomal subunit protein uL22 from Helicobacter pylori (strain HPAG1).